We begin with the raw amino-acid sequence, 212 residues long: HTH-type transcriptional regulator RutR (212 aa).

Residues 17–77 (SAKKKAILSA…AVLRQILDIW (61 aa)) form the HTH tetR-type domain. The segment at residues 39 to 58 (TRLEQIAELAGVSKTNLLYY) is a DNA-binding region (H-T-H motif).

Homodimer.

Functionally, master transcription regulator which represses the degradation of pyrimidines (rutABCDEFG) and purines (gcl operon) for maintenance of metabolic balance between pyrimidines and purines. It also regulates the synthesis of pyrimidine nucleotides and arginine from glutamine (carAB) and the supply of glutamate (gadABWX). This is HTH-type transcriptional regulator RutR (rutR) from Escherichia coli O6:H1 (strain CFT073 / ATCC 700928 / UPEC).